The sequence spans 356 residues: S-adenosylmethionine:tRNA ribosyltransferase-isomerase (356 aa).

Belongs to the QueA family. Monomer.

The protein localises to the cytoplasm. It catalyses the reaction 7-aminomethyl-7-carbaguanosine(34) in tRNA + S-adenosyl-L-methionine = epoxyqueuosine(34) in tRNA + adenine + L-methionine + 2 H(+). It functions in the pathway tRNA modification; tRNA-queuosine biosynthesis. Transfers and isomerizes the ribose moiety from AdoMet to the 7-aminomethyl group of 7-deazaguanine (preQ1-tRNA) to give epoxyqueuosine (oQ-tRNA). The chain is S-adenosylmethionine:tRNA ribosyltransferase-isomerase from Xanthomonas euvesicatoria pv. vesicatoria (strain 85-10) (Xanthomonas campestris pv. vesicatoria).